Here is a 481-residue protein sequence, read N- to C-terminus: Rho GTPase-activating protein 15 (481 aa).

Serine 51, serine 111, serine 204, serine 207, and serine 249 each carry phosphoserine. Residues 87–197 (MVEKEGYLQK…WFQAIKNAID (111 aa)) form the PH domain. The region spanning 287–476 (SHLHTVCERE…FMLTEYDKIF (190 aa)) is the Rho-GAP domain.

The protein localises to the cytoplasm. Its subcellular location is the membrane. Its function is as follows. GTPase activator for the Rho-type GTPases by converting them to an inactive GDP-bound state. Has activity toward RAC1. Overexpression results in an increase in actin stress fibers and cell contraction. The sequence is that of Rho GTPase-activating protein 15 (Arhgap15) from Mus musculus (Mouse).